Reading from the N-terminus, the 389-residue chain is Nicotinate phosphoribosyltransferase (389 aa).

The residue at position 216 (H216) is a Phosphohistidine; by autocatalysis.

This sequence belongs to the NAPRTase family. Transiently phosphorylated on a His residue during the reaction cycle. Phosphorylation strongly increases the affinity for substrates and increases the rate of nicotinate D-ribonucleotide production. Dephosphorylation regenerates the low-affinity form of the enzyme, leading to product release.

It carries out the reaction nicotinate + 5-phospho-alpha-D-ribose 1-diphosphate + ATP + H2O = nicotinate beta-D-ribonucleotide + ADP + phosphate + diphosphate. Its pathway is cofactor biosynthesis; NAD(+) biosynthesis; nicotinate D-ribonucleotide from nicotinate: step 1/1. Its function is as follows. Catalyzes the synthesis of beta-nicotinate D-ribonucleotide from nicotinate and 5-phospho-D-ribose 1-phosphate at the expense of ATP. The protein is Nicotinate phosphoribosyltransferase of Ralstonia pickettii (strain 12J).